Here is a 263-residue protein sequence, read N- to C-terminus: uncharacterized protein (263 aa).

Residue 31–38 (GPTGSGKT) coordinates ATP.

It belongs to the CbbQ/NirQ/NorQ/GpvN family.

This is an uncharacterized protein from Staphylococcus aureus (strain USA300).